Here is a 274-residue protein sequence, read N- to C-terminus: Acyl-[acyl-carrier-protein]--UDP-N-acetylglucosamine O-acyltransferase (274 aa).

Belongs to the transferase hexapeptide repeat family. LpxA subfamily. Homotrimer.

Its subcellular location is the cytoplasm. It catalyses the reaction a (3R)-hydroxyacyl-[ACP] + UDP-N-acetyl-alpha-D-glucosamine = a UDP-3-O-[(3R)-3-hydroxyacyl]-N-acetyl-alpha-D-glucosamine + holo-[ACP]. It functions in the pathway glycolipid biosynthesis; lipid IV(A) biosynthesis; lipid IV(A) from (3R)-3-hydroxytetradecanoyl-[acyl-carrier-protein] and UDP-N-acetyl-alpha-D-glucosamine: step 1/6. Involved in the biosynthesis of lipid A, a phosphorylated glycolipid that anchors the lipopolysaccharide to the outer membrane of the cell. The sequence is that of Acyl-[acyl-carrier-protein]--UDP-N-acetylglucosamine O-acyltransferase from Bartonella henselae (strain ATCC 49882 / DSM 28221 / CCUG 30454 / Houston 1) (Rochalimaea henselae).